The chain runs to 293 residues: Acidic endochitinase (293 aa).

The first 22 residues, 1–22 (MEKCFNIIPSLLLISLLIKSSN), serve as a signal peptide directing secretion. In terms of domain architecture, GH18 spans 24–293 (AGIAVYWGQN…GYSNAIKGSV (270 aa)). Cystine bridges form between cysteine 43/cysteine 90 and cysteine 73/cysteine 80. The active-site Proton donor is glutamate 150. Cysteine 179 and cysteine 208 are joined by a disulfide.

It belongs to the glycosyl hydrolase 18 family. Chitinase class II subfamily.

It localises to the secreted. Its subcellular location is the extracellular space. The enzyme catalyses Random endo-hydrolysis of N-acetyl-beta-D-glucosaminide (1-&gt;4)-beta-linkages in chitin and chitodextrins.. Its function is as follows. This protein functions as a defense against chitin containing fungal pathogens. The polypeptide is Acidic endochitinase (Cicer arietinum (Chickpea)).